Reading from the N-terminus, the 309-residue chain is GTP cyclohydrolase MptA (309 aa).

It belongs to the GTP cyclohydrolase IV family. As to quaternary structure, homodimer. Fe(2+) is required as a cofactor.

The catalysed reaction is GTP + H2O = 7,8-dihydroneopterin 2',3'-cyclic phosphate + formate + diphosphate + H(+). It functions in the pathway cofactor biosynthesis; 5,6,7,8-tetrahydromethanopterin biosynthesis. In terms of biological role, converts GTP to 7,8-dihydro-D-neopterin 2',3'-cyclic phosphate, the first intermediate in the biosynthesis of coenzyme methanopterin. The polypeptide is GTP cyclohydrolase MptA (Methanococcus aeolicus (strain ATCC BAA-1280 / DSM 17508 / OCM 812 / Nankai-3)).